We begin with the raw amino-acid sequence, 388 residues long: Succinate--CoA ligase [ADP-forming] subunit beta (388 aa).

One can recognise an ATP-grasp domain in the interval 9-244 (KSLFAEYGLP…PSQDDAREAH (236 aa)). ATP is bound by residues Lys-46, 53–55 (GRG), Glu-99, Thr-102, and Glu-107. Residues Asn-199 and Asp-213 each coordinate Mg(2+). Residues Asn-264 and 321-323 (GIV) contribute to the substrate site.

The protein belongs to the succinate/malate CoA ligase beta subunit family. As to quaternary structure, heterotetramer of two alpha and two beta subunits. Requires Mg(2+) as cofactor.

The enzyme catalyses succinate + ATP + CoA = succinyl-CoA + ADP + phosphate. It carries out the reaction GTP + succinate + CoA = succinyl-CoA + GDP + phosphate. The protein operates within carbohydrate metabolism; tricarboxylic acid cycle; succinate from succinyl-CoA (ligase route): step 1/1. Succinyl-CoA synthetase functions in the citric acid cycle (TCA), coupling the hydrolysis of succinyl-CoA to the synthesis of either ATP or GTP and thus represents the only step of substrate-level phosphorylation in the TCA. The beta subunit provides nucleotide specificity of the enzyme and binds the substrate succinate, while the binding sites for coenzyme A and phosphate are found in the alpha subunit. The sequence is that of Succinate--CoA ligase [ADP-forming] subunit beta from Shewanella oneidensis (strain ATCC 700550 / JCM 31522 / CIP 106686 / LMG 19005 / NCIMB 14063 / MR-1).